An 812-amino-acid polypeptide reads, in one-letter code: DNA gyrase subunit A (812 aa).

The region spanning 31–496 is the Topo IIA-type catalytic domain; sequence IPDVRDGLKP…GNTDFNVEDV (466 aa). Residue Tyr-119 is the O-(5'-phospho-DNA)-tyrosine intermediate of the active site. Positions 523 to 529 match the GyrA-box motif; that stretch reads QGRGGKG.

This sequence belongs to the type II topoisomerase GyrA/ParC subunit family. As to quaternary structure, heterotetramer, composed of two GyrA and two GyrB chains. In the heterotetramer, GyrA contains the active site tyrosine that forms a transient covalent intermediate with DNA, while GyrB binds cofactors and catalyzes ATP hydrolysis.

The protein resides in the cytoplasm. The catalysed reaction is ATP-dependent breakage, passage and rejoining of double-stranded DNA.. Functionally, a type II topoisomerase that negatively supercoils closed circular double-stranded (ds) DNA in an ATP-dependent manner to modulate DNA topology and maintain chromosomes in an underwound state. Negative supercoiling favors strand separation, and DNA replication, transcription, recombination and repair, all of which involve strand separation. Also able to catalyze the interconversion of other topological isomers of dsDNA rings, including catenanes and knotted rings. Type II topoisomerases break and join 2 DNA strands simultaneously in an ATP-dependent manner. The chain is DNA gyrase subunit A from Kosmotoga olearia (strain ATCC BAA-1733 / DSM 21960 / TBF 19.5.1).